We begin with the raw amino-acid sequence, 442 residues long: Phosphoglucosamine mutase (442 aa).

Catalysis depends on S98, which acts as the Phosphoserine intermediate. Residues S98, D236, D238, and D240 each coordinate Mg(2+). A Phosphoserine modification is found at S98.

Belongs to the phosphohexose mutase family. Mg(2+) is required as a cofactor. In terms of processing, activated by phosphorylation.

The catalysed reaction is alpha-D-glucosamine 1-phosphate = D-glucosamine 6-phosphate. Catalyzes the conversion of glucosamine-6-phosphate to glucosamine-1-phosphate. The polypeptide is Phosphoglucosamine mutase (Natranaerobius thermophilus (strain ATCC BAA-1301 / DSM 18059 / JW/NM-WN-LF)).